The primary structure comprises 532 residues: uncharacterized protein (532 aa).

The next 6 helical transmembrane spans lie at 7–26 (HSSYFSLFLIVALGFMLGRI), 30–52 (GLSLDVSAVIFIALLFGHFGVII), 59–77 (FGLVLFIFTIGIQAGPGFF), 87–109 (LILITMLIICSACLTAVGLKYAF), 116–134 (VVGLIAGALTSTPGLAVAI), and 139–161 (SPLASIAYGIAYPFGVIGVILFV). RCK C-terminal domains follow at residues 179–262 (LEIE…LIGE) and 263–346 (REEG…LLGN). The next 6 membrane-spanning stretches (helical) occupy residues 356-376 (FFPIAMGIVLGVLFGKLNISF), 386-408 (LTGGVLMVALVLSAVGKTGPIIW), 421-440 (LGLLLFLAEVGTSAGKNLVA), 445-467 (SGLLMFGVGAAITVVPMLVAVIV), 474-496 (INILDLLGTITGGMTSTPGLAAA), and 506-528 (SVAYATVYPIAMVFLILFIQVIS).

This sequence belongs to the AAE transporter (TC 2.A.81) family.

Its subcellular location is the cell membrane. This is an uncharacterized protein from Bacteroides thetaiotaomicron (strain ATCC 29148 / DSM 2079 / JCM 5827 / CCUG 10774 / NCTC 10582 / VPI-5482 / E50).